Here is a 397-residue protein sequence, read N- to C-terminus: Mediator of RNA polymerase II transcription subunit 3 (397 aa).

Residue M1 is modified to N-acetylmethionine. A compositionally biased stretch (low complexity) spans 147–165 (ASTPTTTATPHANPITHAH). Disordered stretches follow at residues 147–227 (ASTP…AQAQ), 288–327 (SMGA…QSQL), and 346–370 (FQQQ…MGMN). 2 stretches are compositionally biased toward polar residues: residues 166–178 (SLSN…TMQH) and 189–202 (SGST…HNST). Residues 211–223 (KKPRKPRQTKKAK) show a composition bias toward basic residues. Residues 290–303 (GAQNQGGQVSMSQF) show a composition bias toward polar residues. Positions 309 to 322 (GSNPNTNTNSNNTP) are enriched in low complexity.

Belongs to the mediator complex subunit 3 family. As to quaternary structure, component of the Mediator complex, which is composed of at least 21 subunits that form three structurally distinct submodules. The Mediator head module contains MED6, MED8, MED11, SRB4/MED17, SRB5/MED18, ROX3/MED19, SRB2/MED20 and SRB6/MED22, the middle module contains MED1, MED4, NUT1/MED5, MED7, CSE2/MED9, NUT2/MED10, SRB7/MED21 and SOH1/MED31, and the tail module contains MED2, PGD1/MED3, RGR1/MED14, GAL11/MED15 and SIN4/MED16. The head and the middle modules interact directly with RNA polymerase II, whereas the elongated tail module interacts with gene-specific regulatory proteins. PGD1/MED3 interacts directly with the CYC8-TUP1 corepressor proteins.

The protein resides in the nucleus. Its function is as follows. Component of the Mediator complex, a coactivator involved in the regulated transcription of nearly all RNA polymerase II-dependent genes. Mediator functions as a bridge to convey information from gene-specific regulatory proteins to the basal RNA polymerase II transcription machinery. The Mediator complex, having a compact conformation in its free form, is recruited to promoters by direct interactions with regulatory proteins and serves for the assembly of a functional preinitiation complex with RNA polymerase II and the general transcription factors. The Mediator complex unfolds to an extended conformation and partially surrounds RNA polymerase II, specifically interacting with the unphosphorylated form of the C-terminal domain (CTD) of RNA polymerase II. The Mediator complex dissociates from the RNA polymerase II holoenzyme and stays at the promoter when transcriptional elongation begins. PGD1/MED3 is also involved in direct repeat recombination. The protein is Mediator of RNA polymerase II transcription subunit 3 (PGD1) of Saccharomyces cerevisiae (strain ATCC 204508 / S288c) (Baker's yeast).